The primary structure comprises 262 residues: Phosphatidylglycerol--prolipoprotein diacylglyceryl transferase (262 aa).

3 consecutive transmembrane segments (helical) span residues 17–37 (LKVH…WILA), 57–77 (LVFY…ALFY), and 92–112 (IWEG…AMYA). A 1,2-diacyl-sn-glycero-3-phospho-(1'-sn-glycerol) is bound at residue Arg140. Transmembrane regions (helical) follow at residues 200–220 (MAVS…VEFV) and 234–254 (WLTM…VLLA).

This sequence belongs to the Lgt family.

The protein resides in the cell inner membrane. The enzyme catalyses L-cysteinyl-[prolipoprotein] + a 1,2-diacyl-sn-glycero-3-phospho-(1'-sn-glycerol) = an S-1,2-diacyl-sn-glyceryl-L-cysteinyl-[prolipoprotein] + sn-glycerol 1-phosphate + H(+). Its pathway is protein modification; lipoprotein biosynthesis (diacylglyceryl transfer). Its function is as follows. Catalyzes the transfer of the diacylglyceryl group from phosphatidylglycerol to the sulfhydryl group of the N-terminal cysteine of a prolipoprotein, the first step in the formation of mature lipoproteins. The sequence is that of Phosphatidylglycerol--prolipoprotein diacylglyceryl transferase from Methylococcus capsulatus (strain ATCC 33009 / NCIMB 11132 / Bath).